We begin with the raw amino-acid sequence, 947 residues long: MSKKRLHEIAKEIGKSSKEVVERAKSLGLDVKSHASSVEEADANKIASSFAAGVTKDAQAGSAKDKQVAEQKAKAAKATTPQPAAATQEASQPVAVKPKSRNFKAEREARAKEQAARRQAGQNRSNDRKSDYRQLGRSQGQQTERAGHKSQNQQRDRRFDNRPSSGNNRNDGHRQAGNRDKNRSFNANSRQQDTGRQGQTQAGAPKIDFKARAAALKAEQNAEYARQRESRFREQEEAKRLEQQARQEAKAAALKAQTEDKKHREASAKATEPIASMAAAPVAKPVDKRRKKQNRPDKGHDRDHGLEDGQKKNKKSWNSQNQVRNQKNSNWNNNKKNKKGKHHKNSNTAPKPVTERKFHELPKEFEYSEGMTVAEIAKRIKREPAEIVKKLFMMGVMATQNQSLDGDTIELLMVDYGIEAKAKVEVDEADIERFFTDDSYLNPENIVERAPVVTIMGHVDHGKTTLLDTLRNSRVATGEAGGITQHIGAYQIEEAGKKITFLDTPGHAAFTSMRARGASVTDITILIVAADDGVMPQTIEAINHSKAAGVPIIVAINKIDKPGANPERVISELAEHGIISTAWGGECEFVEISAKFNKNIDELLETVLLVAEVEELKADPTVRAIGTVIEARLDKGKGAVATLLVQQGTLHVQDPIVVGNTFGRVRAMTNDLGRRVKSAEPSTPVSITGLNETPMAGDHFAVYADEKAARAAGEERAKRALLKQRQNTQRVSLDNLFDTLKAGEIKTVNVIIKADVQGSVEALAASLLKIDVEGVRVNVVHSAVGAINESDVTLAEASNAVIIGFNVRPTPQARQQADADDVEIRLHSIIYKVIEEVEEAMKGKLDPEYQEKVLGEAIIRETFKVSKVGTIGGFMVVNGKVTRDSSVRVIRDSVVIFDGKLASLKHYKDDVKEIGNAQEGGLMIEGFNDIKVDDTIEAYVMEEIIRK.

Residues 55-361 (TKDAQAGSAK…PVTERKFHEL (307 aa)) form a disordered region. The segment covering 63–73 (AKDKQVAEQKA) has biased composition (basic and acidic residues). Residues 76-90 (AKATTPQPAAATQEA) show a composition bias toward low complexity. Basic and acidic residues-rich tracts occupy residues 103 to 116 (FKAE…EQAA), 125 to 134 (SNDRKSDYRQ), and 170 to 183 (NDGH…DKNR). Low complexity predominate over residues 190 to 204 (RQQDTGRQGQTQAGA). 3 stretches are compositionally biased toward basic and acidic residues: residues 225–249 (ARQR…RQEA), 257–267 (QTEDKKHREAS), and 294–311 (NRPD…DGQK). Positions 316-334 (SWNSQNQVRNQKNSNWNNN) are enriched in low complexity. Basic residues predominate over residues 335-345 (KKNKKGKHHKN). The 170-residue stretch at 448–617 (ERAPVVTIMG…LLVAEVEELK (170 aa)) folds into the tr-type G domain. A G1 region spans residues 457 to 464 (GHVDHGKT). Residue 457–464 (GHVDHGKT) coordinates GTP. Positions 482–486 (GITQH) are G2. A G3 region spans residues 503–506 (DTPG). Residues 503 to 507 (DTPGH) and 557 to 560 (NKID) contribute to the GTP site. Residues 557-560 (NKID) are G4. Residues 593-595 (SAK) form a G5 region.

This sequence belongs to the TRAFAC class translation factor GTPase superfamily. Classic translation factor GTPase family. IF-2 subfamily.

It localises to the cytoplasm. One of the essential components for the initiation of protein synthesis. Protects formylmethionyl-tRNA from spontaneous hydrolysis and promotes its binding to the 30S ribosomal subunits. Also involved in the hydrolysis of GTP during the formation of the 70S ribosomal complex. This is Translation initiation factor IF-2 from Streptococcus equi subsp. zooepidemicus (strain MGCS10565).